The primary structure comprises 106 residues: MGKLTLLLLALLGWLQYSLWLGKNGVHDYVRVNDDVAVQQGSNAKLKARNDQLFAEIDDLNGGQEAIEERARNELSMIKPGETFYRLVPDQSRRNAASSSQNNLQK.

The Cytoplasmic segment spans residues 1 to 3; that stretch reads MGK. A helical membrane pass occupies residues 4-21; sequence LTLLLLALLGWLQYSLWL. Residues 22–106 are Periplasmic-facing; that stretch reads GKNGVHDYVR…ASSSQNNLQK (85 aa). Residues 40-62 adopt a coiled-coil conformation; sequence QGSNAKLKARNDQLFAEIDDLNG.

This sequence belongs to the FtsB family. Part of a complex composed of FtsB, FtsL and FtsQ.

The protein resides in the cell inner membrane. Essential cell division protein. May link together the upstream cell division proteins, which are predominantly cytoplasmic, with the downstream cell division proteins, which are predominantly periplasmic. In Serratia proteamaculans (strain 568), this protein is Cell division protein FtsB.